Here is a 1105-residue protein sequence, read N- to C-terminus: Mediator of RNA polymerase II transcription subunit 14 (1105 aa).

The segment at A28–P48 is disordered.

It belongs to the Mediator complex subunit 14 family. Component of the Mediator complex.

It is found in the nucleus. Component of the Mediator complex, a coactivator involved in the regulated transcription of nearly all RNA polymerase II-dependent genes. Mediator functions as a bridge to convey information from gene-specific regulatory proteins to the basal RNA polymerase II transcription machinery. Mediator is recruited to promoters by direct interactions with regulatory proteins and serves as a scaffold for the assembly of a functional preinitiation complex with RNA polymerase II and the general transcription factors. The sequence is that of Mediator of RNA polymerase II transcription subunit 14 (RGR1) from Coccidioides immitis (strain RS) (Valley fever fungus).